Consider the following 927-residue polypeptide: Nuclear factor of activated T-cells, cytoplasmic 2 (927 aa).

Positions 1–29 are disordered; that stretch reads MDVPEPQPDPDGGDGPGHEPGGSPQDELD. Residues Ser-23, Ser-53, Ser-54, Ser-56, Ser-99, Ser-107, and Ser-110 each carry the phosphoserine modification. The calcineurin-binding stretch occupies residues 111 to 116; sequence PRIEIT. A transactivation domain A (TAD-A) region spans residues 119 to 201; the sequence is HELMQAGGAL…CVSPNNAGPD (83 aa). 9 positions are modified to phosphoserine: Ser-136, Ser-150, Ser-170, Ser-173, Ser-174, Ser-176, Ser-177, Ser-179, and Ser-182. Positions 163-177 are required for cytoplasmic retention of the phosphorylated form; it reads YREPLCLSPASSGSS. A run of 2 repeats spans residues 186-202 and 215-231. The interval 186-292 is 3 X approximate SP repeats; sequence SPYTSPCVSP…PHVALQDDSI (107 aa). Disordered stretches follow at residues 203-299 and 322-341; these read LCPQ…YPPT and SKIWKTSPDPTPVSTAPSKA. Phosphoserine occurs at positions 215, 219, 223, 238, and 245. The segment covering 216-226 has biased composition (polar residues); it reads PRTSPIMSPRT. The short motif at 253–255 is the Nuclear localization signal element; it reads KRR. Phosphoserine is present on residues Ser-257, Ser-270, Ser-276, Ser-278, Ser-282, Ser-328, and Ser-365. Over residues 267–277 the composition is skewed to low complexity; it reads PAASPQRSRSP. A 3; approximate repeat occupies 274-290; that stretch reads SRSPSPQPSPHVALQDD. In terms of domain architecture, RHD spans 394-576; it reads ASLPPLEWPL…NPIECSQRSA (183 aa). The DNA-binding element occupies 423–430; sequence RAHYETEG. Residues Ser-757, Ser-759, and Ser-761 each carry the phosphoserine modification. Disordered regions lie at residues 790-812 and 841-903; these read AGSQGQGQGSTLPHTSSASQQAS and FGPS…QNLD. Residues 798–812 are compositionally biased toward polar residues; sequence GSTLPHTSSASQQAS. The residue at position 860 (Ser-860) is a Phosphoserine.

In terms of assembly, member of the multicomponent NFATC transcription complex that consists of at least two components, a pre-existing cytoplasmic component NFATC2 and an inducible nuclear component NFATC1. Other members such as NFATC4, NFATC3 or members of the activating protein-1 family, MAF, GATA4 and Cbp/p300 can also bind the complex. The phosphorylated form specifically interacts with XPO1; which mediates nuclear export. NFATC proteins bind to DNA as monomers. Interacts with NFATC2IP. Interacts with FOXP3. Interacts with TBX21 ('Thr-302' phosphorylated form). Interacts with KAT2A. Interacts with HOMER2 and HOMER3; this interaction competes with calcineurin/PPP3CA-binding and hence prevents NFATC2 dephosphorylation and activation. Interacts with protein phosphatase PPP3CA/calcineurin A. Interacts with AKAP5 (via leucine zipper domain); this is required for NFATC2/NFAT1 recruitment to CRAC channels. In resting cells, phosphorylated by NFATC-kinase on at least 18 sites in the 99-365 region. Upon cell stimulation, all these sites except Ser-245 are dephosphorylated by calcineurin. Dephosphorylation induces a conformational change that simultaneously exposes an NLS and masks an NES, which results in nuclear localization. Simultaneously, one site among Ser-53; Ser-54 and Ser-56 is phosphorylated; which is required for full transcriptional activity. In terms of processing, ubiquitinated in endothelial cells by RNF213 downstream of the non-canonical Wnt signaling pathway, leading to its degradation by the proteasome. As to expression, expressed in spleen, heart, testis, brain, placenta, muscle and pancreas. Expressed in the thymus. Expressed in the lung. Expressed in cartilage.

The protein resides in the cytoplasm. It is found in the nucleus. In terms of biological role, plays a role in the inducible expression of cytokine genes in T cells, especially in the induction of the IL-2, IL-3, IL-4, TNF-alpha or GM-CSF. Promotes invasive migration through the activation of GPC6 expression and WNT5A signaling pathway. Is involved in the negative regulation of chondrogenesis. Recruited by AKAP5 to ORAI1 pore-forming subunit of CRAC channels in Ca(2+) signaling microdomains where store-operated Ca(2+) influx is coupled to calmodulin and calcineurin signaling and activation of NFAT-dependent transcriptional responses. This is Nuclear factor of activated T-cells, cytoplasmic 2 (Nfatc2) from Mus musculus (Mouse).